A 443-amino-acid polypeptide reads, in one-letter code: Glutamate--tRNA ligase 2 (443 aa).

The 'HIGH' region motif lies at 7 to 17; it reads PSPTGYLHVGN. The short motif at 236 to 240 is the 'KMSKS' region element; the sequence is KISKR. Position 239 (Lys-239) interacts with ATP.

The protein belongs to the class-I aminoacyl-tRNA synthetase family. Glutamate--tRNA ligase type 1 subfamily. In terms of assembly, monomer.

Its subcellular location is the cytoplasm. It catalyses the reaction tRNA(Glu) + L-glutamate + ATP = L-glutamyl-tRNA(Glu) + AMP + diphosphate. Functionally, catalyzes the attachment of glutamate to tRNA(Glu) in a two-step reaction: glutamate is first activated by ATP to form Glu-AMP and then transferred to the acceptor end of tRNA(Glu). This chain is Glutamate--tRNA ligase 2, found in Ehrlichia canis (strain Jake).